We begin with the raw amino-acid sequence, 155 residues long: Ribosomal RNA large subunit methyltransferase H (155 aa).

S-adenosyl-L-methionine is bound by residues L72, G103, and 122-127 (LSDLTL).

This sequence belongs to the RNA methyltransferase RlmH family. In terms of assembly, homodimer.

It localises to the cytoplasm. It catalyses the reaction pseudouridine(1915) in 23S rRNA + S-adenosyl-L-methionine = N(3)-methylpseudouridine(1915) in 23S rRNA + S-adenosyl-L-homocysteine + H(+). Its function is as follows. Specifically methylates the pseudouridine at position 1915 (m3Psi1915) in 23S rRNA. The sequence is that of Ribosomal RNA large subunit methyltransferase H from Acidovorax sp. (strain JS42).